The primary structure comprises 62 residues: Photosystem II reaction center protein Z (62 aa).

Helical transmembrane passes span 8–28 (AVFA…VVLA) and 41–61 (FSGA…NSFV).

This sequence belongs to the PsbZ family. In terms of assembly, PSII is composed of 1 copy each of membrane proteins PsbA, PsbB, PsbC, PsbD, PsbE, PsbF, PsbH, PsbI, PsbJ, PsbK, PsbL, PsbM, PsbT, PsbY, PsbZ, Psb30/Ycf12, at least 3 peripheral proteins of the oxygen-evolving complex and a large number of cofactors. It forms dimeric complexes.

Its subcellular location is the plastid. It localises to the chloroplast thylakoid membrane. Functionally, may control the interaction of photosystem II (PSII) cores with the light-harvesting antenna, regulates electron flow through the 2 photosystem reaction centers. PSII is a light-driven water plastoquinone oxidoreductase, using light energy to abstract electrons from H(2)O, generating a proton gradient subsequently used for ATP formation. The sequence is that of Photosystem II reaction center protein Z from Zygnema circumcarinatum (Green alga).